We begin with the raw amino-acid sequence, 420 residues long: 3-isopropylmalate dehydratase large subunit (420 aa).

Positions 300, 361, and 364 each coordinate [4Fe-4S] cluster.

Belongs to the aconitase/IPM isomerase family. LeuC type 2 subfamily. As to quaternary structure, heterodimer of LeuC and LeuD. The cofactor is [4Fe-4S] cluster.

The catalysed reaction is (2R,3S)-3-isopropylmalate = (2S)-2-isopropylmalate. It participates in amino-acid biosynthesis; L-leucine biosynthesis; L-leucine from 3-methyl-2-oxobutanoate: step 2/4. Catalyzes the isomerization between 2-isopropylmalate and 3-isopropylmalate, via the formation of 2-isopropylmaleate. This is 3-isopropylmalate dehydratase large subunit from Endomicrobium trichonymphae.